A 702-amino-acid polypeptide reads, in one-letter code: Polyribonucleotide nucleotidyltransferase (702 aa).

Mg(2+)-binding residues include aspartate 486 and aspartate 492. Residues 553 to 612 form the KH domain; it reads PSMATIKIDPEKIRDVIGKGGATIRSITEQTGASIDLDDDGTVRIYAADKASSDAALLKI. Residues 622–690 form the S1 motif domain; the sequence is DKLYKGKVVR…ARGRIKLSMK (69 aa).

It belongs to the polyribonucleotide nucleotidyltransferase family. In terms of assembly, component of the RNA degradosome, which is a multiprotein complex involved in RNA processing and mRNA degradation. Mg(2+) serves as cofactor.

It localises to the cytoplasm. The enzyme catalyses RNA(n+1) + phosphate = RNA(n) + a ribonucleoside 5'-diphosphate. Its function is as follows. Involved in mRNA degradation. Catalyzes the phosphorolysis of single-stranded polyribonucleotides processively in the 3'- to 5'-direction. This chain is Polyribonucleotide nucleotidyltransferase, found in Marinomonas sp. (strain MWYL1).